An 83-amino-acid polypeptide reads, in one-letter code: Apolipoprotein C-I, acidic form (83 aa).

The N-terminal stretch at 1–26 (MRLFLSLPVLVVVLSMVLEGPAPAQG) is a signal peptide.

This sequence belongs to the apolipoprotein C1 family.

The protein resides in the secreted. This chain is Apolipoprotein C-I, acidic form (APOC1A), found in Pan troglodytes (Chimpanzee).